A 311-amino-acid polypeptide reads, in one-letter code: Putative RNA-binding protein R05D3.8 (311 aa).

One can recognise an RRM domain in the interval 155–235 (KRLFVSYFPL…RRAVLKESVK (81 aa)). Residues 261 to 270 (TPSRPVTSVH) show a composition bias toward polar residues. The interval 261–311 (TPSRPVTSVHASSSASSNHYDPSAAAGYAPLYHQPPESDPLSQCGYGPRKW) is disordered.

This Caenorhabditis elegans protein is Putative RNA-binding protein R05D3.8.